A 101-amino-acid polypeptide reads, in one-letter code: Small ribosomal subunit protein bS18c (101 aa).

This sequence belongs to the bacterial ribosomal protein bS18 family. As to quaternary structure, part of the 30S ribosomal subunit.

Its subcellular location is the plastid. It is found in the chloroplast. The sequence is that of Small ribosomal subunit protein bS18c from Vitis vinifera (Grape).